We begin with the raw amino-acid sequence, 421 residues long: Transcription factor rglT (421 aa).

Positions 1–29 (MQYEAYQWGQSHPTSTSGSMLQDTPTAAS) are disordered. Residues 8–29 (WGQSHPTSTSGSMLQDTPTAAS) show a composition bias toward polar residues. The segment at residues 38-65 (CDECRKRKLKCSGEISGCSRCIKQSLSC) is a DNA-binding region (zn(2)-C6 fungal-type). A compositionally biased stretch (basic and acidic residues) spans 346-357 (EARQRRWHESPD). Positions 346 to 371 (EARQRRWHESPDSHPLPPDQRLNIPS) are disordered.

Its subcellular location is the nucleus. In terms of biological role, transcription factor that is important for oxidative stress resistance and essential for gliotoxin (GT) self-protection through the regulation of a gene encoding a putative gliT homolog, even if E.nidulans does not produce gliotoxin itself. The sequence is that of Transcription factor rglT from Emericella nidulans (strain FGSC A4 / ATCC 38163 / CBS 112.46 / NRRL 194 / M139) (Aspergillus nidulans).